We begin with the raw amino-acid sequence, 51 residues long: Large ribosomal subunit protein eL39 (51 aa).

It belongs to the eukaryotic ribosomal protein eL39 family.

The chain is Large ribosomal subunit protein eL39 from Methanosarcina barkeri (strain Fusaro / DSM 804).